Reading from the N-terminus, the 356-residue chain is Outer membrane protein Omp38 (356 aa).

The signal sequence occupies residues 1 to 19 (MKLSRIALATMLVAAPLAA). One can recognise an OmpA-like domain in the interval 221 to 339 (ELTEDLNMEL…RVFATITGSR (119 aa)). Meso-2,6-diaminopimelate is bound by residues asparagine 237, aspartate 271, threonine 273, asparagine 279, and arginine 286.

This sequence belongs to the outer membrane OOP (TC 1.B.6) superfamily. As to quaternary structure, homotrimer. Forms a pore with a size of 1.3 nm.

Its subcellular location is the cell outer membrane. The protein localises to the host mitochondrion. Its function is as follows. Functions as a porin. Induces apoptosis in human cell lines through caspase-dependent and AIF-dependent pathways. Purified Omp38 enters host cell and localizes to the mitochondria, which presumably leads to a release of proapoptotic molecules such as cytochrome c and AIF (apoptosis-inducing factor). Binds peptidoglycan, contributes to cell wall maintenance. The chain is Outer membrane protein Omp38 from Acinetobacter baumannii (strain ATCC 19606 / DSM 30007 / JCM 6841 / CCUG 19606 / CIP 70.34 / NBRC 109757 / NCIMB 12457 / NCTC 12156 / 81).